Reading from the N-terminus, the 753-residue chain is Catalase-peroxidase (753 aa).

Positions 90 to 238 (WHSAGTYRVT…LASSHMGLIY (149 aa)) form a cross-link, tryptophyl-tyrosyl-methioninium (Trp-Tyr) (with M-264). Catalysis depends on His-91, which acts as the Proton acceptor. The disordered stretch occupies residues 196–220 (SEGQEGHEGHGVVQGDESKKQHTDI). Residues 238 to 264 (YVNPEGPDGIPDPVASAKDIRVTFGRM) constitute a cross-link (tryptophyl-tyrosyl-methioninium (Tyr-Met) (with W-90)). Heme b is bound at residue His-279.

Belongs to the peroxidase family. Peroxidase/catalase subfamily. In terms of assembly, homodimer or homotetramer. Heme b serves as cofactor. In terms of processing, formation of the three residue Trp-Tyr-Met cross-link is important for the catalase, but not the peroxidase activity of the enzyme.

The protein resides in the cytoplasm. It carries out the reaction H2O2 + AH2 = A + 2 H2O. The catalysed reaction is 2 H2O2 = O2 + 2 H2O. Its activity is regulated as follows. Inhibited by KCN. Its function is as follows. Bifunctional enzyme with both catalase and broad-spectrum peroxidase activity. The sequence is that of Catalase-peroxidase from Neurospora crassa (strain ATCC 24698 / 74-OR23-1A / CBS 708.71 / DSM 1257 / FGSC 987).